The primary structure comprises 864 residues: DNA mismatch repair protein MutS (864 aa).

607–614 (GPNMGGKS) is an ATP binding site.

This sequence belongs to the DNA mismatch repair MutS family.

Functionally, this protein is involved in the repair of mismatches in DNA. It is possible that it carries out the mismatch recognition step. This protein has a weak ATPase activity. This chain is DNA mismatch repair protein MutS, found in Neisseria meningitidis serogroup C (strain 053442).